Reading from the N-terminus, the 333-residue chain is Tetraacyldisaccharide 4'-kinase (333 aa).

55-62 provides a ligand contact to ATP; it reads TAGGNGKT.

It belongs to the LpxK family.

The enzyme catalyses a lipid A disaccharide + ATP = a lipid IVA + ADP + H(+). It functions in the pathway glycolipid biosynthesis; lipid IV(A) biosynthesis; lipid IV(A) from (3R)-3-hydroxytetradecanoyl-[acyl-carrier-protein] and UDP-N-acetyl-alpha-D-glucosamine: step 6/6. Its function is as follows. Transfers the gamma-phosphate of ATP to the 4'-position of a tetraacyldisaccharide 1-phosphate intermediate (termed DS-1-P) to form tetraacyldisaccharide 1,4'-bis-phosphate (lipid IVA). This chain is Tetraacyldisaccharide 4'-kinase, found in Pectobacterium carotovorum subsp. carotovorum (strain PC1).